A 350-amino-acid polypeptide reads, in one-letter code: Uroporphyrinogen decarboxylase (350 aa).

Substrate contacts are provided by residues 27–31 (RQAGR), phenylalanine 46, aspartate 76, tyrosine 152, serine 207, and histidine 321.

It belongs to the uroporphyrinogen decarboxylase family. Homodimer.

The protein localises to the cytoplasm. It catalyses the reaction uroporphyrinogen III + 4 H(+) = coproporphyrinogen III + 4 CO2. It participates in porphyrin-containing compound metabolism; protoporphyrin-IX biosynthesis; coproporphyrinogen-III from 5-aminolevulinate: step 4/4. In terms of biological role, catalyzes the decarboxylation of four acetate groups of uroporphyrinogen-III to yield coproporphyrinogen-III. The protein is Uroporphyrinogen decarboxylase of Listeria monocytogenes serotype 4a (strain HCC23).